We begin with the raw amino-acid sequence, 139 residues long: Ribulose bisphosphate carboxylase small subunit, chromosomal (139 aa).

Belongs to the RuBisCO small chain family. As to quaternary structure, heterohexadecamer of 8 large and 8 small subunits.

Its function is as follows. RuBisCO catalyzes two reactions: the carboxylation of D-ribulose 1,5-bisphosphate, the primary event in carbon dioxide fixation, as well as the oxidative fragmentation of the pentose substrate. Both reactions occur simultaneously and in competition at the same active site. Although the small subunit is not catalytic it is essential for maximal activity. The sequence is that of Ribulose bisphosphate carboxylase small subunit, chromosomal from Cupriavidus necator (Alcaligenes eutrophus).